The sequence spans 450 residues: 23S rRNA (uracil(1939)-C(5))-methyltransferase RlmD (450 aa).

The segment at 1–22 (MAKHDRGLRFQPAGGSRAPQIP) is disordered. The 59-residue stretch at 20–78 (QIPVGKKQRLTIQRLANDGRGIAFVEGRTWFVSGALAGEEVEARVLGSHGKVVEARAER) folds into the TRAM domain. [4Fe-4S] cluster contacts are provided by Cys91, Cys97, Cys100, and Cys179. S-adenosyl-L-methionine is bound by residues Gln283, Phe312, Asn317, Glu333, Asp360, and Asp381. Cys407 acts as the Nucleophile in catalysis.

The protein belongs to the class I-like SAM-binding methyltransferase superfamily. RNA M5U methyltransferase family. RlmD subfamily.

It catalyses the reaction uridine(1939) in 23S rRNA + S-adenosyl-L-methionine = 5-methyluridine(1939) in 23S rRNA + S-adenosyl-L-homocysteine + H(+). In terms of biological role, catalyzes the formation of 5-methyl-uridine at position 1939 (m5U1939) in 23S rRNA. The chain is 23S rRNA (uracil(1939)-C(5))-methyltransferase RlmD from Pseudomonas fluorescens (strain ATCC BAA-477 / NRRL B-23932 / Pf-5).